Consider the following 221-residue polypeptide: Catechol O-methyltransferase (221 aa).

8 residues coordinate S-adenosyl-L-methionine: Val-41, Gly-65, Leu-67, Ser-71, Glu-89, His-94, Ala-118, and Asp-139. Mg(2+)-binding residues include Asp-139, Asp-165, and Asn-166.

This sequence belongs to the class I-like SAM-binding methyltransferase superfamily. Cation-dependent O-methyltransferase family. In terms of assembly, homodimer. Mg(2+) is required as a cofactor.

The enzyme catalyses a catechol + S-adenosyl-L-methionine = a guaiacol + S-adenosyl-L-homocysteine + H(+). The metal ion affects the meta and para-regiospecificity of the enzyme as well as the enzyme activity and thermal stability. Its function is as follows. Catechol O-methyltransferase that can use various catechol-like compounds. Can produce vanillic acid (meta-form) and iso-vanillic acid (para-form) from protocatechuic acid (PCA). Does not have a regiospecificity, and produces the meta- and para-forms of the products in equal proportion. In Niastella koreensis (strain DSM 17620 / KACC 11465 / NBRC 106392 / GR20-10), this protein is Catechol O-methyltransferase.